Consider the following 137-residue polypeptide: MIKNIGVDQIEVDRIAKVVDRGDGFARKVLTDREFAQYQDLTHKRKIEYLGGRFAIKEAFSKAWGTGIGQAVSFEDVETLRTESGAPVTTSRIFTGRIFSSIAHDDHEIVAVVVLEEPAGWRRAIGKLLHLLSGRKK.

Residues aspartate 8 and glutamate 58 each contribute to the Mg(2+) site.

Belongs to the P-Pant transferase superfamily. AcpS family. It depends on Mg(2+) as a cofactor.

The protein resides in the cytoplasm. It carries out the reaction apo-[ACP] + CoA = holo-[ACP] + adenosine 3',5'-bisphosphate + H(+). In terms of biological role, transfers the 4'-phosphopantetheine moiety from coenzyme A to a Ser of acyl-carrier-protein. This chain is Holo-[acyl-carrier-protein] synthase, found in Lactobacillus delbrueckii subsp. bulgaricus (strain ATCC 11842 / DSM 20081 / BCRC 10696 / JCM 1002 / NBRC 13953 / NCIMB 11778 / NCTC 12712 / WDCM 00102 / Lb 14).